Here is an 83-residue protein sequence, read N- to C-terminus: Delta-conotoxin-like Ac6.2 (83 aa).

Residues 1 to 22 form the signal peptide; that stretch reads MKLTCVVIVAVLFLTAWTFVTA. Positions 23–51 are excised as a propeptide; sequence DDSRYGLKNLFPKARHEMKNPEASKLNKR. Intrachain disulfides connect Cys54/Cys69, Cys61/Cys73, and Cys68/Cys78. A 4-hydroxyproline mark is found at Pro57 and Pro65.

This sequence belongs to the conotoxin O1 superfamily. As to expression, expressed by the venom duct.

The protein resides in the secreted. Delta-conotoxins bind to site 6 of voltage-gated sodium channels (Nav) and inhibit the inactivation process. The protein is Delta-conotoxin-like Ac6.2 of Conus achatinus (Little frog cone).